A 158-amino-acid polypeptide reads, in one-letter code: D-aminoacyl-tRNA deacylase (158 aa).

Residues 143–144 (GP) carry the Gly-cisPro motif, important for rejection of L-amino acids motif.

The protein belongs to the DTD family. As to quaternary structure, homodimer.

Its subcellular location is the cytoplasm. It catalyses the reaction glycyl-tRNA(Ala) + H2O = tRNA(Ala) + glycine + H(+). The catalysed reaction is a D-aminoacyl-tRNA + H2O = a tRNA + a D-alpha-amino acid + H(+). An aminoacyl-tRNA editing enzyme that deacylates mischarged D-aminoacyl-tRNAs. Also deacylates mischarged glycyl-tRNA(Ala), protecting cells against glycine mischarging by AlaRS. Acts via tRNA-based rather than protein-based catalysis; rejects L-amino acids rather than detecting D-amino acids in the active site. By recycling D-aminoacyl-tRNA to D-amino acids and free tRNA molecules, this enzyme counteracts the toxicity associated with the formation of D-aminoacyl-tRNA entities in vivo and helps enforce protein L-homochirality. In Solidesulfovibrio magneticus (strain ATCC 700980 / DSM 13731 / RS-1) (Desulfovibrio magneticus), this protein is D-aminoacyl-tRNA deacylase.